Reading from the N-terminus, the 288-residue chain is MTDTVTHTEAATSKYVNVLEGGTELRVHYNDTGAGKETLVLLHGSGPGASGWANFYRNVDAFANAGYRVILVDCPGWGKSDSIVCTGSRSDLNARVLKGVLDTLGIERAHLVGNSMGGHSAVAFALSYPERVGKLVLMGGGTGGPSQFVPMPTEGIKLLQGLYRDPTLENLKKMLNVFVYDASTMTEELMQTRLDNMLARRDHLENFVKSLTANPKQFPDYGHRLNEIKAPALVIWGRDDRFVPLDVGLRLVWGLPNAEFHVFGRCGHWAQWEHAERFNQMLLDFLGQ.

Positions 39–274 (LVLLHGSGPG…RCGHWAQWEH (236 aa)) constitute an AB hydrolase-1 domain. H268 (proton acceptor) is an active-site residue.

Belongs to the AB hydrolase superfamily. MhpC family. In terms of assembly, homodimer.

It catalyses the reaction (2Z,4E)-2-hydroxy-6-oxonona-2,4-dienedioate + H2O = (2Z)-2-hydroxypenta-2,4-dienoate + succinate + H(+). It carries out the reaction (2Z,4E,7E)-2-hydroxy-6-oxonona-2,4,7-trienedioate + H2O = (2Z)-2-hydroxypenta-2,4-dienoate + fumarate + H(+). It functions in the pathway aromatic compound metabolism; 3-phenylpropanoate degradation. Catalyzes the cleavage of the C5-C6 bond of 2-hydroxy-6-oxononadienedioate and 2-hydroxy-6-oxononatrienedioate, a dienol ring fission product of the bacterial meta-cleavage pathway for degradation of phenylpropionic acid. This chain is 2-hydroxy-6-oxononadienedioate/2-hydroxy-6-oxononatrienedioate hydrolase, found in Paraburkholderia phymatum (strain DSM 17167 / CIP 108236 / LMG 21445 / STM815) (Burkholderia phymatum).